A 291-amino-acid polypeptide reads, in one-letter code: Venom metalloproteinase inhibitor DM43 (291 aa).

2 Ig-like V-type domains span residues 22-79 and 114-171; these read TNVT…ILTS and GLET…PASA. An N-linked (GlcNAc...) asparagine glycan is attached at N23. Disulfide bonds link C28/C74 and C121/C163. Residues N156, N160, and N175 are each glycosylated (N-linked (GlcNAc...) asparagine). An Ig-like V-type 3 domain is found at 191-288; that stretch reads PKANFYILND…DSNVLELDLS (98 aa). Residues C213 and C265 are joined by a disulfide bond.

Homodimer. N-glycosylated. Blood and milk.

Metalloproteinase inhibitor. In Didelphis marsupialis (Southern opossum), this protein is Venom metalloproteinase inhibitor DM43.